A 143-amino-acid chain; its full sequence is Large ribosomal subunit protein uL11 (143 aa).

Belongs to the universal ribosomal protein uL11 family. As to quaternary structure, part of the ribosomal stalk of the 50S ribosomal subunit. Interacts with L10 and the large rRNA to form the base of the stalk. L10 forms an elongated spine to which L12 dimers bind in a sequential fashion forming a multimeric L10(L12)X complex. In terms of processing, one or more lysine residues are methylated.

In terms of biological role, forms part of the ribosomal stalk which helps the ribosome interact with GTP-bound translation factors. The chain is Large ribosomal subunit protein uL11 from Variovorax paradoxus (strain S110).